The chain runs to 105 residues: Ig lambda chain C region (105 aa).

Residues 2 to 100 (PKAAPTVNLF…EGTIVEKTVT (99 aa)) enclose the Ig-like domain. C27 and C86 are oxidised to a cystine.

In Sus scrofa (Pig), this protein is Ig lambda chain C region.